The chain runs to 156 residues: 2-C-methyl-D-erythritol 2,4-cyclodiphosphate synthase (156 aa).

The a divalent metal cation site is built by aspartate 9 and histidine 11. 4-CDP-2-C-methyl-D-erythritol 2-phosphate contacts are provided by residues 9-11 and 36-37; these read DAH and HS. A divalent metal cation is bound at residue histidine 44. 58–60 provides a ligand contact to 4-CDP-2-C-methyl-D-erythritol 2-phosphate; it reads NIG.

This sequence belongs to the IspF family. Homotrimer. It depends on a divalent metal cation as a cofactor.

It carries out the reaction 4-CDP-2-C-methyl-D-erythritol 2-phosphate = 2-C-methyl-D-erythritol 2,4-cyclic diphosphate + CMP. Its pathway is isoprenoid biosynthesis; isopentenyl diphosphate biosynthesis via DXP pathway; isopentenyl diphosphate from 1-deoxy-D-xylulose 5-phosphate: step 4/6. Involved in the biosynthesis of isopentenyl diphosphate (IPP) and dimethylallyl diphosphate (DMAPP), two major building blocks of isoprenoid compounds. Catalyzes the conversion of 4-diphosphocytidyl-2-C-methyl-D-erythritol 2-phosphate (CDP-ME2P) to 2-C-methyl-D-erythritol 2,4-cyclodiphosphate (ME-CPP) with a corresponding release of cytidine 5-monophosphate (CMP). This is 2-C-methyl-D-erythritol 2,4-cyclodiphosphate synthase from Kosmotoga olearia (strain ATCC BAA-1733 / DSM 21960 / TBF 19.5.1).